We begin with the raw amino-acid sequence, 462 residues long: Annexin A7 (462 aa).

The tract at residues 1-130 (MSYPPNQGYP…QGYPPQQGYP (130 aa)) is disordered. The interval 7–131 (QGYPPQSNSP…GYPPQQGYPP (125 aa)) is 19 X 6 AA tandem repeats of Q-G-Y-P-P-Q. Over residues 16-130 (PQPGQYGAPQ…QGYPPQQGYP (115 aa)) the composition is skewed to low complexity. Annexin repeat units lie at residues 161–232 (HDCK…ALLT), 233–304 (EPAH…KLTE), 315–388 (MQVS…AIVT), and 392–462 (NPYG…DIIS).

The protein belongs to the annexin family.

Functionally, calcium/phospholipid-binding protein which promotes membrane fusion and is involved in exocytosis. The chain is Annexin A7 (nxnA) from Dictyostelium discoideum (Social amoeba).